A 92-amino-acid polypeptide reads, in one-letter code: Large ribosomal subunit protein bL34m (92 aa).

Residues 1-46 (MAVLAGSLLGPTSRSAALLGGRWLQPRAWLGFPDAWGLPTPQQARG) constitute a mitochondrion transit peptide. Ser71 carries the phosphoserine modification.

This sequence belongs to the bacterial ribosomal protein bL34 family. Component of the mitochondrial large ribosomal subunit (mt-LSU). Mature mammalian 55S mitochondrial ribosomes consist of a small (28S) and a large (39S) subunit. The 28S small subunit contains a 12S ribosomal RNA (12S mt-rRNA) and 30 different proteins. The 39S large subunit contains a 16S rRNA (16S mt-rRNA), a copy of mitochondrial valine transfer RNA (mt-tRNA(Val)), which plays an integral structural role, and 52 different proteins.

The protein localises to the mitochondrion. The polypeptide is Large ribosomal subunit protein bL34m (MRPL34) (Homo sapiens (Human)).